Reading from the N-terminus, the 486-residue chain is Nuclear distribution protein PAC1 (486 aa).

The stretch at 66-99 (STVLRLQKKIIDLENEISNLNNIINSTNSDNNGI) forms a coiled coil. WD repeat units lie at residues 119-158 (QCENIVTTVKLHPNLPLVLNGCNDGNLYIWNISNDDNTIP), 164-205 (AHTR…RTLN), 206-246 (GHEH…SLKS), 249-291 (GHSE…GVAM), 294-328 (GHSHVVETVKFLPSLQANKILDEYITKNTEQFPTI), 329-368 (PLELLKDKTYNQLGFKYCITASRDNTIKLWLIPPPTIAPH), 389-428 (GHSSWVKSLCVHPNGKFIISGSDDKTIKFWDLSGLLETGY), and 437-483 (GHDG…NSIK).

Belongs to the WD repeat LIS1/nudF family. In terms of assembly, self-associates. Interacts with NDL1 and dynein.

The protein localises to the cytoplasm. The protein resides in the cytoskeleton. It is found in the spindle pole. Positively regulates the activity of the minus-end directed microtubule motor protein dynein. Plays a central role in positioning the mitotic spindle at the bud neck during cell division. Targets cytoplasmic dynein to microtubule plus ends, thereby promoting dynein-mediated microtubule sliding along the bud cortex and consequently the movement of the mitotic spindle to the bud neck. The protein is Nuclear distribution protein PAC1 of Candida albicans (strain SC5314 / ATCC MYA-2876) (Yeast).